Here is a 750-residue protein sequence, read N- to C-terminus: Catalase A (750 aa).

The tract at residues 30–49 (ERDTADAHTQQPLTTDHGVR) is disordered. Catalysis depends on residues His93 and Asn166. Heme is bound at residue Tyr380.

This sequence belongs to the catalase family. Heme serves as cofactor.

The protein resides in the peroxisome matrix. The enzyme catalyses 2 H2O2 = O2 + 2 H2O. Catalyzes the degradation of hydrogen peroxide (H(2)O(2)) generated by peroxisomal oxidases to water and oxygen, thereby protecting cells from the toxic effects of hydrogen peroxide. The sequence is that of Catalase A (catA) from Aspergillus fumigatus (strain ATCC MYA-4609 / CBS 101355 / FGSC A1100 / Af293) (Neosartorya fumigata).